The primary structure comprises 240 residues: Orotidine 5'-phosphate decarboxylase (240 aa).

Residues Asp10, Lys33, Asp60–Thr69, Thr123, Arg185, Gln194, Gly214, and Arg215 contribute to the substrate site. The active-site Proton donor is the Lys62.

It belongs to the OMP decarboxylase family. Type 1 subfamily. As to quaternary structure, homodimer.

The catalysed reaction is orotidine 5'-phosphate + H(+) = UMP + CO2. The protein operates within pyrimidine metabolism; UMP biosynthesis via de novo pathway; UMP from orotate: step 2/2. Catalyzes the decarboxylation of orotidine 5'-monophosphate (OMP) to uridine 5'-monophosphate (UMP). The chain is Orotidine 5'-phosphate decarboxylase from Lactobacillus delbrueckii subsp. bulgaricus (strain ATCC 11842 / DSM 20081 / BCRC 10696 / JCM 1002 / NBRC 13953 / NCIMB 11778 / NCTC 12712 / WDCM 00102 / Lb 14).